The chain runs to 89 residues: MSLTKEFKADVIKQFGASEKNTGKSEVQVALYTRRISDLTGHLQLHPKDKHSRRGLLMLVAKRKKMLNYVKNIDIDRYRKVIAELDLRK.

Belongs to the universal ribosomal protein uS15 family. Part of the 30S ribosomal subunit. Forms a bridge to the 50S subunit in the 70S ribosome, contacting the 23S rRNA.

In terms of biological role, one of the primary rRNA binding proteins, it binds directly to 16S rRNA where it helps nucleate assembly of the platform of the 30S subunit by binding and bridging several RNA helices of the 16S rRNA. Functionally, forms an intersubunit bridge (bridge B4) with the 23S rRNA of the 50S subunit in the ribosome. The polypeptide is Small ribosomal subunit protein uS15 (Pelodictyon phaeoclathratiforme (strain DSM 5477 / BU-1)).